The sequence spans 471 residues: Ribulose bisphosphate carboxylase large chain (471 aa).

Substrate is bound by residues Asn119 and Thr169. Lys171 (proton acceptor) is an active-site residue. Lys173 serves as a coordination point for substrate. Mg(2+) is bound by residues Lys197, Asp199, and Glu200. Lys197 is modified (N6-carboxylysine). His290 serves as the catalytic Proton acceptor. Residues Arg291, His323, and Ser375 each contribute to the substrate site.

Belongs to the RuBisCO large chain family. Type I subfamily. In terms of assembly, heterohexadecamer of 8 large chains and 8 small chains; disulfide-linked. The disulfide link is formed within the large subunit homodimers. Requires Mg(2+) as cofactor. In terms of processing, the disulfide bond which can form in the large chain dimeric partners within the hexadecamer appears to be associated with oxidative stress and protein turnover.

Its subcellular location is the carboxysome. The enzyme catalyses 2 (2R)-3-phosphoglycerate + 2 H(+) = D-ribulose 1,5-bisphosphate + CO2 + H2O. It carries out the reaction D-ribulose 1,5-bisphosphate + O2 = 2-phosphoglycolate + (2R)-3-phosphoglycerate + 2 H(+). Its function is as follows. RuBisCO catalyzes two reactions: the carboxylation of D-ribulose 1,5-bisphosphate, the primary event in carbon dioxide fixation, as well as the oxidative fragmentation of the pentose substrate in the photorespiration process. Both reactions occur simultaneously and in competition at the same active site. The chain is Ribulose bisphosphate carboxylase large chain from Crocosphaera subtropica (strain ATCC 51142 / BH68) (Cyanothece sp. (strain ATCC 51142)).